A 153-amino-acid chain; its full sequence is MNARRRLWSLLMLILAVGTAATLTIMALRRNLTYLYMPSEVLRGDTAQQTHFRLGGIVEKGSFQRTSGTLHTRFIVTDGNARLQVRYARILPDLFREGQAVVATGQMQHGIFIAENILARHNETYTPRTLTNKMQPTPTQHTHLDTPIAQTTP.

The Cytoplasmic segment spans residues 1–6; that stretch reads MNARRR. The chain crosses the membrane as a helical; Signal-anchor for type II membrane protein span at residues 7–27; it reads LWSLLMLILAVGTAATLTIMA. The Periplasmic portion of the chain corresponds to 28 to 153; it reads LRRNLTYLYM…LDTPIAQTTP (126 aa). Residues His121 and Tyr125 each coordinate heme. The span at 130–141 shows a compositional bias: polar residues; that stretch reads LTNKMQPTPTQH. The tract at residues 130–153 is disordered; that stretch reads LTNKMQPTPTQHTHLDTPIAQTTP.

Belongs to the CcmE/CycJ family.

The protein resides in the cell inner membrane. Functionally, heme chaperone required for the biogenesis of c-type cytochromes. Transiently binds heme delivered by CcmC and transfers the heme to apo-cytochromes in a process facilitated by CcmF and CcmH. This chain is Cytochrome c-type biogenesis protein CcmE, found in Xylella fastidiosa (strain 9a5c).